The sequence spans 602 residues: uncharacterized protein (602 aa).

Residues Asn305, Asn497, and Asn577 are each glycosylated (N-linked (GlcNAc...) asparagine).

In terms of processing, N-glycosylated.

It is found in the vacuole. This is an uncharacterized protein from Saccharomyces cerevisiae (strain ATCC 204508 / S288c) (Baker's yeast).